The following is a 103-amino-acid chain: Histone H4 (103 aa).

The segment covering 1-14 (MSGRGKGGKGLGKG) has biased composition (gly residues). Residues 1-20 (MSGRGKGGKGLGKGGAKRHR) form a disordered region. A DNA-binding region spans residues 17–21 (KRHRK).

It belongs to the histone H4 family. The nucleosome is a histone octamer containing two molecules each of H2A, H2B, H3 and H4 assembled in one H3-H4 heterotetramer and two H2A-H2B heterodimers. The octamer wraps approximately 147 bp of DNA.

It localises to the nucleus. The protein localises to the chromosome. In terms of biological role, core component of nucleosome. Nucleosomes wrap and compact DNA into chromatin, limiting DNA accessibility to the cellular machineries which require DNA as a template. Histones thereby play a central role in transcription regulation, DNA repair, DNA replication and chromosomal stability. DNA accessibility is regulated via a complex set of post-translational modifications of histones, also called histone code, and nucleosome remodeling. This chain is Histone H4 (H41), found in Physarum polycephalum (Slime mold).